The sequence spans 549 residues: Probable protein kinase UbiB (549 aa).

The Protein kinase domain occupies 123 to 501; it reads DFNETPLASA…QQQAHKSNYL (379 aa). ATP is bound by residues 129-137 and K152; that span reads LASASISQV. D287 serves as the catalytic Proton acceptor. 2 helical membrane passes run 498-518 and 520-540; these read SNYLLITSAILLICGTLLFNQ and ATLWSPYVCLISGAALWIIGW.

Belongs to the ABC1 family. UbiB subfamily.

The protein resides in the cell inner membrane. It participates in cofactor biosynthesis; ubiquinone biosynthesis [regulation]. Functionally, is probably a protein kinase regulator of UbiI activity which is involved in aerobic coenzyme Q (ubiquinone) biosynthesis. The sequence is that of Probable protein kinase UbiB from Shewanella sp. (strain MR-4).